Here is a 320-residue protein sequence, read N- to C-terminus: GTP 3',8-cyclase (320 aa).

Residues 4 to 226 (TFQRSINYMR…PIITDATSPA (223 aa)) enclose the Radical SAM core domain. Arginine 13 is a binding site for GTP. [4Fe-4S] cluster-binding residues include cysteine 20 and cysteine 24. Tyrosine 26 provides a ligand contact to S-adenosyl-L-methionine. Residue cysteine 27 coordinates [4Fe-4S] cluster. Position 63 (arginine 63) interacts with GTP. Glycine 67 provides a ligand contact to S-adenosyl-L-methionine. Threonine 94 is a GTP binding site. Serine 118 contacts S-adenosyl-L-methionine. GTP is bound at residue lysine 155. Methionine 189 contacts S-adenosyl-L-methionine. [4Fe-4S] cluster contacts are provided by cysteine 249 and cysteine 252. 254–256 (RIR) serves as a coordination point for GTP. Cysteine 266 serves as a coordination point for [4Fe-4S] cluster.

Belongs to the radical SAM superfamily. MoaA family. As to quaternary structure, monomer and homodimer. It depends on [4Fe-4S] cluster as a cofactor.

It catalyses the reaction GTP + AH2 + S-adenosyl-L-methionine = (8S)-3',8-cyclo-7,8-dihydroguanosine 5'-triphosphate + 5'-deoxyadenosine + L-methionine + A + H(+). It functions in the pathway cofactor biosynthesis; molybdopterin biosynthesis. In terms of biological role, catalyzes the cyclization of GTP to (8S)-3',8-cyclo-7,8-dihydroguanosine 5'-triphosphate. The chain is GTP 3',8-cyclase from Alkaliphilus metalliredigens (strain QYMF).